A 436-amino-acid polypeptide reads, in one-letter code: Enolase (436 aa).

Glutamine 167 is a binding site for (2R)-2-phosphoglycerate. Glutamate 209 functions as the Proton donor in the catalytic mechanism. Residues aspartate 246, glutamate 291, and aspartate 318 each contribute to the Mg(2+) site. Lysine 343, arginine 372, serine 373, and lysine 394 together coordinate (2R)-2-phosphoglycerate. Lysine 343 acts as the Proton acceptor in catalysis.

The protein belongs to the enolase family. In terms of assembly, component of the RNA degradosome, a multiprotein complex involved in RNA processing and mRNA degradation. It depends on Mg(2+) as a cofactor.

It is found in the cytoplasm. The protein resides in the secreted. It localises to the cell surface. The enzyme catalyses (2R)-2-phosphoglycerate = phosphoenolpyruvate + H2O. The protein operates within carbohydrate degradation; glycolysis; pyruvate from D-glyceraldehyde 3-phosphate: step 4/5. Its function is as follows. Catalyzes the reversible conversion of 2-phosphoglycerate (2-PG) into phosphoenolpyruvate (PEP). It is essential for the degradation of carbohydrates via glycolysis. This is Enolase from Haemophilus influenzae (strain 86-028NP).